We begin with the raw amino-acid sequence, 124 residues long: MNNILFVALGGSIGAVFRYLLSIFMLQLFGSAFPFGTLLVNVIGSFLMGTIYALGQVSQVSPEIKALVGVGLLGALTTFSTFSNETLLLIQSGAWIKAFFNIALNLCLCIFMVYLGQQLVFSRI.

3 helical membrane-spanning segments follow: residues 5–27 (LFVA…FMLQ), 70–90 (VGLL…LLLI), and 95–115 (WIKA…MVYL). Positions 74 and 77 each coordinate Na(+).

This sequence belongs to the fluoride channel Fluc/FEX (TC 1.A.43) family.

Its subcellular location is the cell inner membrane. It catalyses the reaction fluoride(in) = fluoride(out). Its activity is regulated as follows. Na(+) is not transported, but it plays an essential structural role and its presence is essential for fluoride channel function. Fluoride-specific ion channel. Important for reducing fluoride concentration in the cell, thus reducing its toxicity. The sequence is that of Fluoride-specific ion channel FluC from Shewanella sediminis (strain HAW-EB3).